The chain runs to 507 residues: Probable cytochrome P450 6a18 (507 aa).

Cysteine 451 serves as a coordination point for heme.

The protein belongs to the cytochrome P450 family. Heme is required as a cofactor.

The protein resides in the endoplasmic reticulum membrane. Its subcellular location is the microsome membrane. In terms of biological role, may be involved in the metabolism of insect hormones and in the breakdown of synthetic insecticides. The polypeptide is Probable cytochrome P450 6a18 (Cyp6a18) (Drosophila melanogaster (Fruit fly)).